A 467-amino-acid polypeptide reads, in one-letter code: Dimethylamine methyltransferase MtbB1 (467 aa).

Pyrrolysine 356 is a non-standard amino acid (pyrrolysine).

It belongs to the dimethylamine methyltransferase family. May form homotetramers or homopentamers.

The catalysed reaction is Co(I)-[dimethylamine-specific corrinoid protein] + dimethylamine + H(+) = methyl-Co(III)-[dimethylamine-specific corrinoid protein] + methylamine. It functions in the pathway one-carbon metabolism; methanogenesis from dimethylamine. Its function is as follows. Catalyzes the transfer of a methyl group from dimethylamine to the corrinoid cofactor of MtbC. The major or perhaps only DMA methyltransferase expressed under inducing conditions. This chain is Dimethylamine methyltransferase MtbB1, found in Methanosarcina barkeri.